The primary structure comprises 218 residues: MGQKVHPLGFRLGITKSHSSFWYVERRHYASFVKEDIVIRNFMNKELLETLISLIKIERIYEFSEQRNNTIVYIHVARPERVIGRDGQGLSRIRDILIDRMNYLLGKTPRIITCKVVGVTSPNLDARLLADSVRRELEKRTPFIRAMKTVMLQAMKAGAEGIKVQVSGRLNGIEIARTEWFREGRVPLHTLRADIDYFNDIAHTIYGVLGIKVWVYKV.

The KH type-2 domain occupies 39-120 (IRNFMNKELL…IITCKVVGVT (82 aa)).

The protein belongs to the universal ribosomal protein uS3 family. Part of the 30S ribosomal subunit.

It is found in the plastid. It localises to the chloroplast. This Euglena gracilis protein is Small ribosomal subunit protein uS3c (rps3).